Reading from the N-terminus, the 54-residue chain is MARTDIRPIVKLRSTAGTGYTYTTRKNRRNDPDRLILRKYDPILRRHVDFREER.

This sequence belongs to the bacterial ribosomal protein bL33 family.

This Mycobacterium bovis (strain ATCC BAA-935 / AF2122/97) protein is Large ribosomal subunit protein bL33A (rpmG1).